Here is a 1081-residue protein sequence, read N- to C-terminus: DNA polymerase delta catalytic subunit (1081 aa).

The disordered stretch occupies residues 1–22 (MTSKRPGGSSFQPEVKRKRESD). Cys-981, Cys-984, Cys-998, and Cys-1001 together coordinate Zn(2+). The segment at 981–1001 (CLGCKSVLPRAESENAVCKHC) adopts a CysA-type zinc-finger fold. [4Fe-4S] cluster contacts are provided by Cys-1030, Cys-1033, Cys-1043, and Cys-1048. The short motif at 1030–1048 (CQNCAKTMQDKVNCSARDC) is the CysB motif element.

Belongs to the DNA polymerase type-B family. Heterodimer with subunits of 125 kDa and 50 kDa. The 125 kDa subunit contains the polymerase active site and most likely the active site for the 3'-5' exonuclease activity. Requires [4Fe-4S] cluster as cofactor.

The protein localises to the nucleus. It carries out the reaction DNA(n) + a 2'-deoxyribonucleoside 5'-triphosphate = DNA(n+1) + diphosphate. Functionally, possesses two enzymatic activities: DNA synthesis (polymerase) and an exonucleolytic activity that degrades single stranded DNA in the 3'- to 5'-direction. Required with its accessory proteins (proliferating cell nuclear antigen (PCNA) and replication factor C (RFC) or activator 1) for leading strand synthesis. Also involved in completing Okazaki fragments initiated by the DNA polymerase alpha/primase complex. The protein is DNA polymerase delta catalytic subunit of Caenorhabditis elegans.